The primary structure comprises 512 residues: MLFEGLELVSALATLAACLVSVTLLLAVSQQLWQLRWAATRDKSCKLPIPKGSMGFPLIGETGHWLLQGSGFQSSRREKYGNVFKTHLLGRPLIRVTGAENVRKILMGEHHLVSTEWPRSTRMLLGPNTVSNSIGDIHRNKRKVFSKIFSHEALESYLPKIQLVIQDTLRAWSSHPEAINVYQEAQKLTFRMAIRVLLGFSIPEEDLGHLFEVYQQFVENVFSLPVDLPFSGYRRGIQARQTLQKGLEKAIREKLQCTQGKDYSDALDILIESSKEHGKEMTMQELKDGTLELIFAAYATTASASTSLIMQLLKHPAVLEKLREELRAKGLLHSGGCPCEGTLRLDTLSGLHYLDCVIKEVMRLFTPVSGGYRTVLQTFELDGFQIPKGWSVMYSIRDTHDTAPVFKDVNVFDPDRFGQARSEDKDGRFHYLPFGGGVRTCLGKHLAKLFLKVLAVELASTSRFELATRTFPRITLVPVLHPVDGLSVKFFGLDSNQNKILPETEAMLSATV.

Position 441 (cysteine 441) interacts with heme.

This sequence belongs to the cytochrome P450 family. Requires heme as cofactor.

It localises to the endoplasmic reticulum membrane. Its subcellular location is the microsome membrane. The catalysed reaction is all-trans-retinoate + reduced [NADPH--hemoprotein reductase] + O2 = all-trans-4-hydroxyretinoate + oxidized [NADPH--hemoprotein reductase] + H2O + H(+). It catalyses the reaction all-trans-retinoate + reduced [NADPH--hemoprotein reductase] + O2 = all-trans-18-hydroxyretinoate + oxidized [NADPH--hemoprotein reductase] + H2O + H(+). In terms of biological role, a cytochrome P450 monooxygenase involved in the metabolism of retinoates (RAs), the active metabolites of vitamin A, and critical signaling molecules in animals. RAs exist as at least four different isomers: all-trans-RA (atRA), 9-cis-RA, 13-cis-RA, and 9,13-dicis-RA, where atRA is considered to be the biologically active isomer, although 9-cis-RA and 13-cis-RA also have activity. Catalyzes the hydroxylation of atRA primarily at C-4 and C-18, thereby contributing to the regulation of atRA homeostasis and signaling. Hydroxylation of atRA limits its biological activity and initiates a degradative process leading to its eventual elimination. Involved in the convertion of atRA to all-trans-4-oxo-RA. Can oxidize all-trans-13,14-dihydroretinoate (DRA) to metabolites which could include all-trans-4-oxo-DRA, all-trans-4-hydroxy-DRA, all-trans-5,8-epoxy-DRA, and all-trans-18-hydroxy-DRA. Shows preference for the following substrates: atRA &gt; 9-cis-RA &gt; 13-cis-RA. Plays a central role in germ cell development: acts by degrading RAs in the developing testis, preventing STRA8 expression, thereby leading to delay of meiosis. Required for the maintenance of the undifferentiated state of male germ cells during embryonic development in Sertoli cells, inducing arrest in G0 phase of the cell cycle and preventing meiotic entry. Plays a role in skeletal development, both at the level of patterning and in the ossification of bone and the establishment of some synovial joints. Essential for postnatal survival. Also has a significant activity in oxidation of tazarotenic acid and may therefore metabolize that xenobiotic in vivo. The sequence is that of Cytochrome P450 26B1 (CYP26B1) from Bos taurus (Bovine).